The primary structure comprises 323 residues: Melanocortin receptor 3 (323 aa).

Residues 1–37 (MNSSCCLSSVSPMLPNLSEHPAAPPASNRSGSGFCEQ) lie on the Extracellular side of the membrane. 3 N-linked (GlcNAc...) asparagine glycosylation sites follow: N2, N16, and N28. Residues 38-63 (VFIKPEVFLALGIVSLMENILVILAV) form a helical membrane-spanning segment. The Cytoplasmic portion of the chain corresponds to 64–75 (VRNGNLHSPMYF). A helical transmembrane segment spans residues 76–100 (FLCSLAAADMLVSLSNSLETIMIAV). At 101 to 118 (INSDSLTLEDQFIQHMDN) the chain is on the extracellular side. A helical transmembrane segment spans residues 119-140 (IFDSMICISLVASICNLLAIAI). The Cytoplasmic segment spans residues 141–160 (DRYVTIFYALRYHSIMTVRK). A helical membrane pass occupies residues 161–181 (ALTLIGVIWVCCGICGVMFII). The Extracellular portion of the chain corresponds to 182-186 (YSESK). Residues 187–210 (MVIVCLITMFFAMVLLMGTLYIHM) form a helical membrane-spanning segment. The Cytoplasmic portion of the chain corresponds to 211 to 245 (FLFARLHVQRIAVLPPAGVVAPQQHSCMKGAVTIT). A helical transmembrane segment spans residues 246–268 (ILLGVFIFCWAPFFLHLVLIITC). Residues 269 to 277 (PTNPYCICY) are Extracellular-facing. Residues 278-301 (TAHFNTYLVLIMCNSVIDPLIYAF) traverse the membrane as a helical segment. The Cytoplasmic segment spans residues 302–323 (RSLELRNTFKEILCGCNSMNLG). Residue C315 is the site of S-palmitoyl cysteine attachment.

The protein belongs to the G-protein coupled receptor 1 family. As to expression, brain.

The protein resides in the cell membrane. Functionally, receptor for MSH (alpha, beta and gamma) and ACTH. This receptor is mediated by G proteins which activate adenylate cyclase. Required for expression of anticipatory patterns of activity and wakefulness during periods of limited nutrient availability and for the normal regulation of circadian clock activity in the brain. This chain is Melanocortin receptor 3 (Mc3r), found in Mus musculus (Mouse).